A 181-amino-acid chain; its full sequence is ADP-ribosylation factor 1 (181 aa).

Glycine 2 carries the N-myristoyl glycine lipid modification. Residues glycine 24–threonine 31, aspartate 67–glutamine 71, and asparagine 126–aspartate 129 each bind GTP.

The protein belongs to the small GTPase superfamily. Arf family.

The protein resides in the golgi apparatus. It carries out the reaction GTP + H2O = GDP + phosphate + H(+). In terms of biological role, GTP-binding protein involved in protein trafficking; may modulate vesicle budding and uncoating within the Golgi apparatus. The sequence is that of ADP-ribosylation factor 1 (ARF1) from Daucus carota (Wild carrot).